Here is a 108-residue protein sequence, read N- to C-terminus: uncharacterized protein (108 aa).

The next 3 membrane-spanning stretches (helical) occupy residues 26 to 46 (GAVY…ALII), 54 to 74 (LMTL…PLIF), and 84 to 104 (INYQ…CIYM).

The protein resides in the cell membrane. This is an uncharacterized protein from Methanocaldococcus jannaschii (strain ATCC 43067 / DSM 2661 / JAL-1 / JCM 10045 / NBRC 100440) (Methanococcus jannaschii).